The following is a 458-amino-acid chain: NADH-ubiquinone oxidoreductase chain 4 (458 aa).

13 helical membrane-spanning segments follow: residues Leu23–Leu43, Ile59–Met79, Leu99–Phe119, Leu148–Ile168, Ser174–Ser194, Leu197–Leu217, Pro227–Ile247, Leu260–Leu280, Ile289–Ala311, Ala315–Tyr337, Phe355–Phe375, Ile396–Met416, and Leu438–Ile458.

This sequence belongs to the complex I subunit 4 family.

The protein localises to the mitochondrion membrane. The catalysed reaction is a ubiquinone + NADH + 5 H(+)(in) = a ubiquinol + NAD(+) + 4 H(+)(out). Functionally, core subunit of the mitochondrial membrane respiratory chain NADH dehydrogenase (Complex I) that is believed to belong to the minimal assembly required for catalysis. Complex I functions in the transfer of electrons from NADH to the respiratory chain. The immediate electron acceptor for the enzyme is believed to be ubiquinone. This Petromyzon marinus (Sea lamprey) protein is NADH-ubiquinone oxidoreductase chain 4 (MT-ND4).